The following is a 277-amino-acid chain: Large ribosomal subunit protein uL2 (277 aa).

Disordered regions lie at residues Lys-32–Gly-58 and Val-225–Asn-277.

It belongs to the universal ribosomal protein uL2 family. In terms of assembly, part of the 50S ribosomal subunit. Forms a bridge to the 30S subunit in the 70S ribosome.

Functionally, one of the primary rRNA binding proteins. Required for association of the 30S and 50S subunits to form the 70S ribosome, for tRNA binding and peptide bond formation. It has been suggested to have peptidyltransferase activity; this is somewhat controversial. Makes several contacts with the 16S rRNA in the 70S ribosome. The sequence is that of Large ribosomal subunit protein uL2 from Borrelia recurrentis (strain A1).